A 294-amino-acid chain; its full sequence is Nucleoside-specific channel-forming protein Tsx (294 aa).

The first 22 residues, 1–22, serve as a signal peptide directing secretion; it reads MKKTLLAAGAVVALSTTFAAGA.

It belongs to the nucleoside-specific channel-forming outer membrane porin (Tsx) (TC 1.B.10) family.

The protein resides in the cell outer membrane. In terms of biological role, functions as a substrate-specific channel for nucleosides and deoxynucleosides. Also functions in albicidin uptake and as receptor for colicin K. Also is a receptor for several Tsx-specific bacteriophages. This is Nucleoside-specific channel-forming protein Tsx from Klebsiella pneumoniae.